Here is a 138-residue protein sequence, read N- to C-terminus: MSRVVSALMGLVLMFGCAFFSVQPQAQALDLSNGFVSAAVLGERVNPADKVLESEYGKKIDLNNASVRLFRELRGFYPTLAKRIIENAPYDSVEDVLNIPDLSEKQLARLEENLERFTVTPPADVFIDGDQRLNTGDY.

Positions methionine 1 to alanine 28 are cleaved as a signal peptide. The propeptide occupies leucine 29 to glycine 42.

It belongs to the PsbU family. As to quaternary structure, PSII is composed of 1 copy each of membrane proteins PsbA, PsbB, PsbC, PsbD, PsbE, PsbF, PsbH, PsbI, PsbJ, PsbK, PsbL, PsbM, PsbT, PsbX, PsbY, PsbZ, Psb30/Ycf12, peripheral proteins PsbO, CyanoQ (PsbQ), PsbU, PsbV and a large number of cofactors. It forms dimeric complexes.

It is found in the cellular thylakoid membrane. Functionally, one of the extrinsic, lumenal subunits of photosystem II (PSII). PSII is a light-driven water plastoquinone oxidoreductase, using light energy to abstract electrons from H(2)O, generating a proton gradient subsequently used for ATP formation. The extrinsic proteins stabilize the structure of photosystem II oxygen-evolving complex (OEC), the ion environment of oxygen evolution and protect the OEC against heat-induced inactivation. This chain is Photosystem II extrinsic protein U, found in Picosynechococcus sp. (strain ATCC 27264 / PCC 7002 / PR-6) (Agmenellum quadruplicatum).